The chain runs to 225 residues: Imidazole glycerol phosphate synthase subunit HisH (225 aa).

In terms of domain architecture, Glutamine amidotransferase type-1 spans Thr-3 to Pro-225. Residue Cys-82 is the Nucleophile of the active site. Residues His-205 and Glu-207 contribute to the active site.

Heterodimer of HisH and HisF.

It is found in the cytoplasm. The enzyme catalyses 5-[(5-phospho-1-deoxy-D-ribulos-1-ylimino)methylamino]-1-(5-phospho-beta-D-ribosyl)imidazole-4-carboxamide + L-glutamine = D-erythro-1-(imidazol-4-yl)glycerol 3-phosphate + 5-amino-1-(5-phospho-beta-D-ribosyl)imidazole-4-carboxamide + L-glutamate + H(+). The catalysed reaction is L-glutamine + H2O = L-glutamate + NH4(+). The protein operates within amino-acid biosynthesis; L-histidine biosynthesis; L-histidine from 5-phospho-alpha-D-ribose 1-diphosphate: step 5/9. Its function is as follows. IGPS catalyzes the conversion of PRFAR and glutamine to IGP, AICAR and glutamate. The HisH subunit catalyzes the hydrolysis of glutamine to glutamate and ammonia as part of the synthesis of IGP and AICAR. The resulting ammonia molecule is channeled to the active site of HisF. The protein is Imidazole glycerol phosphate synthase subunit HisH of Bordetella bronchiseptica (strain ATCC BAA-588 / NCTC 13252 / RB50) (Alcaligenes bronchisepticus).